We begin with the raw amino-acid sequence, 49 residues long: Sperm protamine P1 (49 aa).

It belongs to the protamine P1 family. Testis.

The protein resides in the nucleus. The protein localises to the chromosome. Functionally, protamines substitute for histones in the chromatin of sperm during the haploid phase of spermatogenesis. They compact sperm DNA into a highly condensed, stable and inactive complex. This Rhinopoma hardwickii (Lesser mouse-tailed bat) protein is Sperm protamine P1 (PRM1).